The following is a 648-amino-acid chain: Serine/threonine-protein kinase plk-1 (648 aa).

The segment at 1–24 (MNRLPNIAKPPQKSNQRKEKAPPE) is disordered. One can recognise a Protein kinase domain in the interval 38–289 (YEKGRFLGKG…AKQVQRDGFF (252 aa)). ATP-binding positions include 44-52 (LGKGGFAHC) and Lys67. Residue Asp161 is the Proton acceptor of the active site. POLO box domains follow at residues 412–492 (WISK…YMND) and 514–596 (TLRV…RLMS). A compositionally biased stretch (low complexity) spans 612–629 (PRSMAAARSASAGSRGPN).

The protein belongs to the protein kinase superfamily. Ser/Thr protein kinase family. CDC5/Polo subfamily. Interacts with mex-5, mex-6 and spat-1. As to expression, embryos.

Its subcellular location is the cytoplasm. It is found in the cytoskeleton. The protein localises to the microtubule organizing center. The protein resides in the centrosome. It localises to the midbody. Its subcellular location is the nucleus. It is found in the chromosome. The protein localises to the centromere. The protein resides in the kinetochore. The catalysed reaction is L-seryl-[protein] + ATP = O-phospho-L-seryl-[protein] + ADP + H(+). The enzyme catalyses L-threonyl-[protein] + ATP = O-phospho-L-threonyl-[protein] + ADP + H(+). In terms of biological role, required for oocyte nuclear envelope breakdown before entry of oocyte into spermatheca. In meiotic cells, required for spindle dynamics and probably for spindle attachment to the chromosomes. Zygotic role in the development of the germline and nerve cord. In mitotic cells, plays a role in spindle organization and centrosome maturation. Involved in asymmetric nuclear localization of cdc-25.1 during embryogenesis which affects cell division timing. Together with plk-2, regulates cytoplasm polarity in early embryos. May play a minor role in chromosome pairing and synapsis during oocyte meiosis I. This Caenorhabditis elegans protein is Serine/threonine-protein kinase plk-1 (plk-1).